A 220-amino-acid chain; its full sequence is ATP-dependent Clp protease proteolytic subunit 1 (220 aa).

The Nucleophile role is filled by S118. H143 is a catalytic residue.

The protein belongs to the peptidase S14 family. In terms of assembly, fourteen ClpP subunits assemble into 2 heptameric rings which stack back to back to give a disk-like structure with a central cavity, resembling the structure of eukaryotic proteasomes.

The protein resides in the cytoplasm. The catalysed reaction is Hydrolysis of proteins to small peptides in the presence of ATP and magnesium. alpha-casein is the usual test substrate. In the absence of ATP, only oligopeptides shorter than five residues are hydrolyzed (such as succinyl-Leu-Tyr-|-NHMec, and Leu-Tyr-Leu-|-Tyr-Trp, in which cleavage of the -Tyr-|-Leu- and -Tyr-|-Trp bonds also occurs).. Its function is as follows. Cleaves peptides in various proteins in a process that requires ATP hydrolysis. Has a chymotrypsin-like activity. Plays a major role in the degradation of misfolded proteins. In Rhodococcus jostii (strain RHA1), this protein is ATP-dependent Clp protease proteolytic subunit 1.